A 192-amino-acid chain; its full sequence is Secreted and transmembrane protein 1A (192 aa).

An N-terminal signal peptide occupies residues 1-27 (MMTCPSVPAIPTLWLFSILLLVVSLNA). Over 28-165 (QNKSWDNPIC…SSPIEGKPGT (138 aa)) the chain is Extracellular. 4 N-linked (GlcNAc...) asparagine glycosylation sites follow: N29, N55, N84, and N127. Residues 166–186 (LVGVITVIFILGVAGFITFIY) form a helical membrane-spanning segment. Residues 187–192 (YRHRRS) are Cytoplasmic-facing.

It belongs to the SECTM family.

The protein resides in the cell membrane. It localises to the secreted. The polypeptide is Secreted and transmembrane protein 1A (Mus musculus (Mouse)).